The sequence spans 625 residues: Interleukin-1 receptor-associated kinase-like 2 (625 aa).

Positions 13–94 (LDDPCRNMDA…RAAQIILNWK (82 aa)) constitute a Death domain. A disordered region spans residues 111–181 (KPEKPLAASV…SSDSKDFSTS (71 aa)). Ser-144 bears the Phosphoserine mark. Positions 169-181 (LPTSSDSKDFSTS) are enriched in polar residues. In terms of domain architecture, Protein kinase spans 210–503 (FNQNHKISQG…GSVAAVEEWL (294 aa)). Residues 216–224 (ISQGTFADV), Lys-237, and 337–340 (KSSN) contribute to the ATP site. The tract at residues 513–539 (SGLSEGTGSSSNTPEETDDVDNSSLDA) is disordered. Residues 516 to 526 (SEGTGSSSNTP) are compositionally biased toward polar residues.

The protein belongs to the protein kinase superfamily. TKL Ser/Thr protein kinase family. Pelle subfamily. As to quaternary structure, interacts with MYD88. IL-1 stimulation leads to the formation of a signaling complex which dissociates from the IL-1 receptor following the binding of PELI1.

Functionally, binds to the IL-1 type I receptor following IL-1 engagement, triggering intracellular signaling cascades leading to transcriptional up-regulation and mRNA stabilization. This Pongo abelii (Sumatran orangutan) protein is Interleukin-1 receptor-associated kinase-like 2 (IRAK2).